Consider the following 623-residue polypeptide: Kelch repeat and BTB domain-containing protein 2 (623 aa).

The region spanning 31 to 98 is the BTB domain; it reads TDIVLIVEGT…AYTGNLAMND (68 aa). In terms of domain architecture, BACK spans 133-229; it reads CVRLLSFADL…IRIDALSEVT (97 aa). At Ser-300 the chain carries Phosphoserine. Kelch repeat units lie at residues 317–380, 381–429, 431–469, 470–529, and 535–581; these read DIYI…CCEG, YIYA…VVHD, IYVM…AFGD, KIFY…RAVV, and CVFM…DFRC.

Component of the BCR(KBTBD2) E3 ubiquitin ligase complex, at least composed of CUL3, KBTBD2 and RBX1. Interacts (via the BTB domain) with CUL3.

It functions in the pathway protein modification; protein ubiquitination. Functionally, substrate-specific adapter of a BCR (BTB-CUL3-RBX1) E3 ubiquitin ligase complex that acts as a regulator of the insulin signaling pathway, modulating insulin sensitivity by limiting PIK3R1/p85alpha abundance in adipocytes. Targets PIK3R1, the regulatory subunit of phosphatidylinositol 3-kinase (PI3K), for 'Lys-48'-linked polyubiquitination and proteasome-mediated degradation. The sequence is that of Kelch repeat and BTB domain-containing protein 2 from Homo sapiens (Human).